The chain runs to 375 residues: CCA-adding enzyme (375 aa).

2 residues coordinate ATP: Gly8 and Arg11. 2 residues coordinate CTP: Gly8 and Arg11. Residues Asp21 and Asp23 each contribute to the Mg(2+) site. The ATP site is built by Arg91, Arg137, and Arg140. Arg91, Arg137, and Arg140 together coordinate CTP.

Belongs to the tRNA nucleotidyltransferase/poly(A) polymerase family. Bacterial CCA-adding enzyme type 2 subfamily. Requires Mg(2+) as cofactor.

It catalyses the reaction a tRNA precursor + 2 CTP + ATP = a tRNA with a 3' CCA end + 3 diphosphate. The catalysed reaction is a tRNA with a 3' CCA end + 2 CTP + ATP = a tRNA with a 3' CCACCA end + 3 diphosphate. In terms of biological role, catalyzes the addition and repair of the essential 3'-terminal CCA sequence in tRNAs without using a nucleic acid template. Adds these three nucleotides in the order of C, C, and A to the tRNA nucleotide-73, using CTP and ATP as substrates and producing inorganic pyrophosphate. tRNA 3'-terminal CCA addition is required both for tRNA processing and repair. Also involved in tRNA surveillance by mediating tandem CCA addition to generate a CCACCA at the 3' terminus of unstable tRNAs. While stable tRNAs receive only 3'-terminal CCA, unstable tRNAs are marked with CCACCA and rapidly degraded. The polypeptide is CCA-adding enzyme (Pseudomonas entomophila (strain L48)).